Reading from the N-terminus, the 540-residue chain is Chaperonin GroEL (540 aa).

Residues 30–33, K51, 87–91, G415, and D496 each bind ATP; these read TLGP and DGTTT.

It belongs to the chaperonin (HSP60) family. In terms of assembly, forms a cylinder of 14 subunits composed of two heptameric rings stacked back-to-back. Interacts with the co-chaperonin GroES.

It localises to the cytoplasm. The catalysed reaction is ATP + H2O + a folded polypeptide = ADP + phosphate + an unfolded polypeptide.. Its function is as follows. Together with its co-chaperonin GroES, plays an essential role in assisting protein folding. The GroEL-GroES system forms a nano-cage that allows encapsulation of the non-native substrate proteins and provides a physical environment optimized to promote and accelerate protein folding. The polypeptide is Chaperonin GroEL (Thermodesulfovibrio yellowstonii (strain ATCC 51303 / DSM 11347 / YP87)).